A 352-amino-acid polypeptide reads, in one-letter code: Transcriptional regulatory protein AlgP (352 aa).

Residues 128–352 (KALESRKAKP…SNGAAPTSAS (225 aa)) form a disordered region. The span at 138–341 (ATKPAAKAAA…SSAASATPAA (204 aa)) shows a compositional bias: low complexity.

In terms of biological role, the promoter for a critical alginate biosynthetic gene, AlgD, encoding GDP-mannose dehydrogenase, is activated only under conditions reminiscent of the cystic fibrosis lung (i.e. under high osmolarity), and at least two regulatory genes, AlgP and AlgQ, have been implicated in this activation process. The chain is Transcriptional regulatory protein AlgP (algP) from Pseudomonas aeruginosa (strain ATCC 15692 / DSM 22644 / CIP 104116 / JCM 14847 / LMG 12228 / 1C / PRS 101 / PAO1).